Reading from the N-terminus, the 350-residue chain is Biotin synthase (350 aa).

In terms of domain architecture, Radical SAM core spans Asn41–Arg268. Cys56, Cys60, and Cys63 together coordinate [4Fe-4S] cluster. Positions 100, 131, 191, and 263 each coordinate [2Fe-2S] cluster.

This sequence belongs to the radical SAM superfamily. Biotin synthase family. As to quaternary structure, homodimer. [4Fe-4S] cluster is required as a cofactor. Requires [2Fe-2S] cluster as cofactor.

The catalysed reaction is (4R,5S)-dethiobiotin + (sulfur carrier)-SH + 2 reduced [2Fe-2S]-[ferredoxin] + 2 S-adenosyl-L-methionine = (sulfur carrier)-H + biotin + 2 5'-deoxyadenosine + 2 L-methionine + 2 oxidized [2Fe-2S]-[ferredoxin]. It functions in the pathway cofactor biosynthesis; biotin biosynthesis; biotin from 7,8-diaminononanoate: step 2/2. Functionally, catalyzes the conversion of dethiobiotin (DTB) to biotin by the insertion of a sulfur atom into dethiobiotin via a radical-based mechanism. This Shewanella piezotolerans (strain WP3 / JCM 13877) protein is Biotin synthase.